A 316-amino-acid chain; its full sequence is ATP synthase gamma chain (316 aa).

It belongs to the ATPase gamma chain family. F-type ATPases have 2 components, CF(1) - the catalytic core - and CF(0) - the membrane proton channel. CF(1) has five subunits: alpha(3), beta(3), gamma(1), delta(1), epsilon(1). CF(0) has three main subunits: a, b and c.

It localises to the cellular thylakoid membrane. Produces ATP from ADP in the presence of a proton gradient across the membrane. The gamma chain is believed to be important in regulating ATPase activity and the flow of protons through the CF(0) complex. In Prochlorococcus marinus (strain NATL1A), this protein is ATP synthase gamma chain.